The following is a 244-amino-acid chain: Phosphoadenosine 5'-phosphosulfate reductase (244 aa).

C239 serves as the catalytic Nucleophile; cysteine thiosulfonate intermediate.

This sequence belongs to the PAPS reductase family. CysH subfamily.

It is found in the cytoplasm. The catalysed reaction is [thioredoxin]-disulfide + sulfite + adenosine 3',5'-bisphosphate + 2 H(+) = [thioredoxin]-dithiol + 3'-phosphoadenylyl sulfate. It functions in the pathway sulfur metabolism; hydrogen sulfide biosynthesis; sulfite from sulfate: step 3/3. Catalyzes the formation of sulfite from phosphoadenosine 5'-phosphosulfate (PAPS) using thioredoxin as an electron donor. The protein is Phosphoadenosine 5'-phosphosulfate reductase of Yersinia enterocolitica serotype O:8 / biotype 1B (strain NCTC 13174 / 8081).